The chain runs to 197 residues: Imidazoleglycerol-phosphate dehydratase (197 aa).

Belongs to the imidazoleglycerol-phosphate dehydratase family.

The protein resides in the cytoplasm. The catalysed reaction is D-erythro-1-(imidazol-4-yl)glycerol 3-phosphate = 3-(imidazol-4-yl)-2-oxopropyl phosphate + H2O. It functions in the pathway amino-acid biosynthesis; L-histidine biosynthesis; L-histidine from 5-phospho-alpha-D-ribose 1-diphosphate: step 6/9. The polypeptide is Imidazoleglycerol-phosphate dehydratase (Erythrobacter litoralis (strain HTCC2594)).